The chain runs to 1161 residues: Immunoglobulin superfamily member 3 (1161 aa).

The signal sequence occupies residues 1–16 (MGTAALLILLAGVSWA). Topologically, residues 17–1091 (QREVAIQPGP…LQSTICANDA (1075 aa)) are extracellular. Ig-like C2-type domains lie at 18 to 135 (REVA…AKVN), 140 to 258 (PDTL…WFPL), 272 to 382 (PTDK…RGPS), 402 to 523 (PLRT…WQLL), 541 to 651 (FAVT…RETS), 674 to 796 (PRLQ…EETS), 806 to 930 (PDAN…WYRR), and 947 to 1063 (PQLQ…WYLL). Cystine bridges form between Cys-39–Cys-117 and Cys-164–Cys-242. An EWI motif motif is present at residues 246 to 248 (EWI). Cystine bridges form between Cys-298–Cys-372, Cys-428–Cys-507, Cys-562–Cys-641, Cys-697–Cys-775, Cys-831–Cys-914, and Cys-970–Cys-1047. Residues 1092–1112 (LFYLVFFYPFPIFGILIITIL) form a helical membrane-spanning segment. The Cytoplasmic portion of the chain corresponds to 1113 to 1161 (LVRFRHRPTGKPGEGKNGVPLLWIKEPHLNYSPTCLEPPVLSIHPGTID).

It localises to the membrane. In Xenopus tropicalis (Western clawed frog), this protein is Immunoglobulin superfamily member 3 (igsf3).